The following is a 404-amino-acid chain: Acetylornithine/succinyldiaminopimelate aminotransferase (404 aa).

Pyridoxal 5'-phosphate is bound by residues 108 to 109 (GA) and Phe141. A N(2)-acetyl-L-ornithine-binding site is contributed by Arg144. 226–229 (DEIQ) lines the pyridoxal 5'-phosphate pocket. Lys255 is subject to N6-(pyridoxal phosphate)lysine. Thr283 contacts N(2)-acetyl-L-ornithine. A pyridoxal 5'-phosphate-binding site is contributed by Thr284.

This sequence belongs to the class-III pyridoxal-phosphate-dependent aminotransferase family. ArgD subfamily. Homodimer. The cofactor is pyridoxal 5'-phosphate.

The protein localises to the cytoplasm. It carries out the reaction N(2)-acetyl-L-ornithine + 2-oxoglutarate = N-acetyl-L-glutamate 5-semialdehyde + L-glutamate. The catalysed reaction is N-succinyl-(2S,6S)-2,6-diaminopimelate + 2-oxoglutarate = (S)-2-succinylamino-6-oxoheptanedioate + L-glutamate. The protein operates within amino-acid biosynthesis; L-arginine biosynthesis; N(2)-acetyl-L-ornithine from L-glutamate: step 4/4. It functions in the pathway amino-acid biosynthesis; L-lysine biosynthesis via DAP pathway; LL-2,6-diaminopimelate from (S)-tetrahydrodipicolinate (succinylase route): step 2/3. Functionally, involved in both the arginine and lysine biosynthetic pathways. The polypeptide is Acetylornithine/succinyldiaminopimelate aminotransferase (Buchnera aphidicola subsp. Schizaphis graminum (strain Sg)).